A 468-amino-acid chain; its full sequence is Tyramine receptor tyra-2 (468 aa).

Topologically, residues 1-23 (MMSSYVMSPVDETYTLFQILKGS) are extracellular. Residues 24–43 (ALFLLVLWTIFANSLVFIVL) form a helical membrane-spanning segment. The Cytoplasmic portion of the chain corresponds to 44 to 54 (YKNPRLQTVPN). Residues 55–77 (LLVGNLAFSDLALGLIVLPLSSV) traverse the membrane as a helical segment. Residues 78 to 91 (YAIAGEWVFPDALC) lie on the Extracellular side of the membrane. A disulfide bridge connects residues Cys-91 and Cys-177. A helical membrane pass occupies residues 92 to 114 (EVFVSADILCSTASIWNLSIVGL). Over 115-134 (DRYWAITSPVAYMSKRNKRT) the chain is Cytoplasmic. A helical transmembrane segment spans residues 135-157 (AGIMILSVWISSALISLAPLLGW). At 158–186 (KQTAQTPNLIYEKNNTVRQCTFLDLPSYT) the chain is on the extracellular side. An N-linked (GlcNAc...) asparagine glycan is attached at Asn-171. The helical transmembrane segment at 187–209 (VYSATGSFFIPTLLMFFVYFKIY) threads the bilayer. The Cytoplasmic portion of the chain corresponds to 210-387 (QAFAKHRARQ…SAAKERRGVK (178 aa)). The segment at 252–306 (DEFAKEEEEEEDSESSGQVENGLGNGNDAIIEEDECEDEDSDEKRDDHTSMTTVT) is disordered. 2 stretches are compositionally biased toward acidic residues: residues 255-265 (AKEEEEEEDSE) and 281-292 (IIEEDECEDEDS). The chain crosses the membrane as a helical span at residues 388–410 (VLGIILGCFTVCWAPFFTMYVLV). The Extracellular segment spans residues 411 to 424 (QFCKDCSPNAHIEM). A helical transmembrane segment spans residues 425–444 (FITWLGYSNSAMNPIIYTVF). The Cytoplasmic portion of the chain corresponds to 445 to 468 (NRDYQIALKRLFTSEKKPSSTSRV).

The protein belongs to the G-protein coupled receptor 1 family. Expressed in the pharyngeal neurons, MCL/R and NSML/R and the AS group of amphidial sensory neurons, ASEL/R, AGSL/R, ASHL/R and ASIL/R.

The protein resides in the cell membrane. Its function is as follows. G-protein coupled receptor for tyramine, a known neurotransmitter and neuromodulator and direct precursor of octopamine. Expression in amphidial sensory neurons suggests a role in chemosensation. This is Tyramine receptor tyra-2 (tyra-2) from Caenorhabditis elegans.